A 271-amino-acid chain; its full sequence is Probable esterase D14L (271 aa).

The active-site Nucleophile is the serine 96. Catalysis depends on residues aspartate 218 and histidine 247.

The protein belongs to the AB hydrolase superfamily. Component of an intracellular receptor complex involved in the detection of the smoke compound karrikin. In terms of tissue distribution, expressed constitutively in all organs (e.g. roots, stems, leaves, panicles and embryos).

The protein localises to the nucleus. The protein resides in the cytoplasm. In terms of biological role, may be involved in strigolactone signaling pathway. Essential for plant responses to karrikins, a class of butenolide compounds, structurally similar to strigolactones, released from burning vegetation that stimulate seed germination and enhance seedling photomorphogenesis. Mediates a specific perception of karrikin. Required for the establishment of symbiosis with the arbuscular mycorrhizal fungi (AMF) Rhizophagus irregularis and Gigaspora rosea. Karrikin binding induces a conformational change. The chain is Probable esterase D14L (D14L) from Oryza sativa subsp. japonica (Rice).